Here is a 75-residue protein sequence, read N- to C-terminus: uncharacterized protein (75 aa).

The helical transmembrane segment at 44-64 (IINMIVIWAALIALFVKLYIL) threads the bilayer.

It is found in the host membrane. This is an uncharacterized protein from Ostreid herpesvirus 1 (isolate France) (OsHV-1).